A 36-amino-acid chain; its full sequence is MKAFSPVRSIRKNSLLDHRLGISQSKTPVDDLMSLL.

This Homo sapiens (Human) protein is Putative DNA-binding protein inhibitor ID-2B (ID2B).